Consider the following 254-residue polypeptide: uncharacterized protein (254 aa).

The NADP(+) site is built by V7 and N85. Residue S136 is the Proton donor of the active site. NADP(+) is bound by residues Y150, K154, V181, and T183. Y150 acts as the Proton acceptor in catalysis. K154 (lowers pKa of active site Tyr) is an active-site residue.

Belongs to the short-chain dehydrogenases/reductases (SDR) family.

This is an uncharacterized protein from Saccharomyces cerevisiae (strain ATCC 204508 / S288c) (Baker's yeast).